Consider the following 400-residue polypeptide: Telomere repeat-binding protein 6 (400 aa).

One can recognise a Ubiquitin-like domain in the interval 173–252 (VKFGIKSLNI…DDENLGSLGF (80 aa)). An HTH myb-type domain is found at 310–369 (VQRRIRRPFTVSEVEALVQAVERLGTGRWRDVKSHAFNHVNHRTYVDLKDKWKTLVHTAK). A DNA-binding region (H-T-H motif) is located at residues 338–365 (WRDVKSHAFNHVNHRTYVDLKDKWKTLV).

As to quaternary structure, homodimer. As to expression, expressed ubiquitously.

The protein resides in the nucleus. In terms of biological role, binds specifically to the plant telomeric double-stranded DNA sequences. At least 4 repeats of telomeric sequences are required for binding. The chain is Telomere repeat-binding protein 6 (TRP6) from Arabidopsis thaliana (Mouse-ear cress).